Reading from the N-terminus, the 79-residue chain is Cytochrome b (79 aa).

The next 3 membrane-spanning stretches (helical) occupy residues S1 to M7, W31 to I52, and W67 to A79. The heme b site is built by H37 and H51.

It belongs to the cytochrome b family. In terms of assembly, the cytochrome bc1 complex contains 11 subunits: 3 respiratory subunits (MT-CYB, CYC1 and UQCRFS1), 2 core proteins (UQCRC1 and UQCRC2) and 6 low-molecular weight proteins (UQCRH/QCR6, UQCRB/QCR7, UQCRQ/QCR8, UQCR10/QCR9, UQCR11/QCR10 and a cleavage product of UQCRFS1). This cytochrome bc1 complex then forms a dimer. It depends on heme b as a cofactor.

It localises to the mitochondrion inner membrane. Its function is as follows. Component of the ubiquinol-cytochrome c reductase complex (complex III or cytochrome b-c1 complex) that is part of the mitochondrial respiratory chain. The b-c1 complex mediates electron transfer from ubiquinol to cytochrome c. Contributes to the generation of a proton gradient across the mitochondrial membrane that is then used for ATP synthesis. The polypeptide is Cytochrome b (MT-CYB) (Dipodomys heermanni (Heermann's kangaroo rat)).